Reading from the N-terminus, the 351-residue chain is Histidinol-phosphate aminotransferase (351 aa).

Lys-215 carries the post-translational modification N6-(pyridoxal phosphate)lysine.

The protein belongs to the class-II pyridoxal-phosphate-dependent aminotransferase family. Histidinol-phosphate aminotransferase subfamily. Requires pyridoxal 5'-phosphate as cofactor.

The enzyme catalyses L-histidinol phosphate + 2-oxoglutarate = 3-(imidazol-4-yl)-2-oxopropyl phosphate + L-glutamate. Its pathway is amino-acid biosynthesis; L-histidine biosynthesis; L-histidine from 5-phospho-alpha-D-ribose 1-diphosphate: step 7/9. The polypeptide is Histidinol-phosphate aminotransferase (Methanocorpusculum labreanum (strain ATCC 43576 / DSM 4855 / Z)).